The sequence spans 206 residues: Probable thymidylate kinase (206 aa).

Residue 10-17 (GIDGSGKS) participates in ATP binding.

Belongs to the thymidylate kinase family.

It catalyses the reaction dTMP + ATP = dTDP + ADP. In Methanosarcina mazei (strain ATCC BAA-159 / DSM 3647 / Goe1 / Go1 / JCM 11833 / OCM 88) (Methanosarcina frisia), this protein is Probable thymidylate kinase.